We begin with the raw amino-acid sequence, 397 residues long: GTPase Obg (397 aa).

One can recognise an Obg domain in the interval 1–159; sequence MKFVDEATII…RNLRLELKVL (159 aa). Positions 128-148 are disordered; that stretch reads TRFKSSVNRAPRQTSKGSEGE. A compositionally biased stretch (polar residues) spans 129–144; the sequence is RFKSSVNRAPRQTSKG. Residues 160 to 333 form the OBG-type G domain; the sequence is ADVGLLGLPN…LVQAVMRWIE (174 aa). Residues 166–173, 191–195, 213–216, 283–286, and 314–316 each bind GTP; these read GLPNAGKS, FTTLV, DIPG, NKVD, and SAL. 2 residues coordinate Mg(2+): serine 173 and threonine 193. Positions 336 to 347 are enriched in acidic residues; that stretch reads AEQEADNPDFAE. Positions 336 to 397 are disordered; the sequence is AEQEADNPDF…YDVEVVYAPE (62 aa). Basic and acidic residues predominate over residues 349-370; the sequence is EAARRRRMDEEARQKIEADRQA. A compositionally biased stretch (acidic residues) spans 378-390; that stretch reads DDDDDFDDDDYDV.

Belongs to the TRAFAC class OBG-HflX-like GTPase superfamily. OBG GTPase family. In terms of assembly, monomer. Mg(2+) is required as a cofactor.

Its subcellular location is the cytoplasm. In terms of biological role, an essential GTPase which binds GTP, GDP and possibly (p)ppGpp with moderate affinity, with high nucleotide exchange rates and a fairly low GTP hydrolysis rate. Plays a role in control of the cell cycle, stress response, ribosome biogenesis and in those bacteria that undergo differentiation, in morphogenesis control. The protein is GTPase Obg of Marinobacter nauticus (strain ATCC 700491 / DSM 11845 / VT8) (Marinobacter aquaeolei).